Here is a 181-residue protein sequence, read N- to C-terminus: Protein GrpE (181 aa).

Residues 1–21 (MNKEQQDLQTEQEAAVETAEL) are disordered. Positions 8–21 (LQTEQEAAVETAEL) are enriched in low complexity.

Belongs to the GrpE family. In terms of assembly, homodimer.

The protein localises to the cytoplasm. In terms of biological role, participates actively in the response to hyperosmotic and heat shock by preventing the aggregation of stress-denatured proteins, in association with DnaK and GrpE. It is the nucleotide exchange factor for DnaK and may function as a thermosensor. Unfolded proteins bind initially to DnaJ; upon interaction with the DnaJ-bound protein, DnaK hydrolyzes its bound ATP, resulting in the formation of a stable complex. GrpE releases ADP from DnaK; ATP binding to DnaK triggers the release of the substrate protein, thus completing the reaction cycle. Several rounds of ATP-dependent interactions between DnaJ, DnaK and GrpE are required for fully efficient folding. The polypeptide is Protein GrpE (Trichlorobacter lovleyi (strain ATCC BAA-1151 / DSM 17278 / SZ) (Geobacter lovleyi)).